We begin with the raw amino-acid sequence, 500 residues long: GTPase Der (500 aa).

2 consecutive EngA-type G domains span residues 3–166 and 211–384; these read PVVA…MEEL and IKLA…VSAT. GTP is bound by residues 9 to 16, 56 to 60, 118 to 121, 217 to 224, 264 to 268, and 329 to 332; these read GRPNVGKS, DTGGI, NKID, DTAGV, and NKWD. The KH-like domain occupies 385 to 469; the sequence is KRVGTSVLTR…PIRIQFQNSE (85 aa). The segment at 481–500 is disordered; the sequence is LSQERQRKRLVGAVKNRNKK. Basic residues predominate over residues 486 to 500; that stretch reads QRKRLVGAVKNRNKK.

This sequence belongs to the TRAFAC class TrmE-Era-EngA-EngB-Septin-like GTPase superfamily. EngA (Der) GTPase family. As to quaternary structure, associates with the 50S ribosomal subunit.

Functionally, GTPase that plays an essential role in the late steps of ribosome biogenesis. This Aliivibrio salmonicida (strain LFI1238) (Vibrio salmonicida (strain LFI1238)) protein is GTPase Der.